A 352-amino-acid polypeptide reads, in one-letter code: Staphylococcal superantigen-like 3 (352 aa).

A signal peptide spans 1-30 (MKMRTIAKTSLALGLLTTGAITVTTQSVKA). Residues 61–165 (ATTQAANTRQ…TIKQAQTDMT (105 aa)) are disordered. Basic and acidic residues predominate over residues 69 to 104 (RQERTPKLEKAPNTNEEKTSASKIEKISQPKQEEQK). Over residues 114 to 141 (PKQEQSQTTTESTTPKTKVTTPPSTNTP) the composition is skewed to low complexity. A compositionally biased stretch (polar residues) spans 142–164 (QPMQSTKSDTPQSPTIKQAQTDM). A sialyl Lewis X-binding region spans residues 228-326 (IDVFIVLEDN…VIKMKNGGKY (99 aa)).

It belongs to the staphylococcal/streptococcal toxin family. Interacts with host TLR2 (via its extracellular domain).

The protein localises to the secreted. Its function is as follows. Secreted protein that plays an essential role in immune innate response inhibition by interacting with and inhibiting host TLR2. In turn, bacteria recognition by immune cells is impaired and cytokine production is inhibited. Mechanistically, by interacting with TLR2, blocks ligand binding and thus inhibits activation. Second, by interacting with an already formed TLR2-lipopeptide complex, prevents TLR heterodimerization and downstream signaling. The interaction with host TLR2 does not involve sialyl Lewis X interactions. This chain is Staphylococcal superantigen-like 3, found in Staphylococcus aureus (strain Newman).